We begin with the raw amino-acid sequence, 309 residues long: Probable manganese-dependent inorganic pyrophosphatase (309 aa).

Residues His-9, Asp-13, Asp-15, Asp-75, His-97, and Asp-149 each contribute to the Mn(2+) site.

This sequence belongs to the PPase class C family. It depends on Mn(2+) as a cofactor.

The protein resides in the cytoplasm. It catalyses the reaction diphosphate + H2O = 2 phosphate + H(+). The chain is Probable manganese-dependent inorganic pyrophosphatase from Bacillus cereus (strain 03BB102).